Consider the following 296-residue polypeptide: GTPase Era (296 aa).

Residues 7 to 174 enclose the Era-type G domain; it reads KCSMSAIVGT…VDYLCETSPY (168 aa). Residues 15 to 22 are G1; sequence GTTNAGKS. 15–22 serves as a coordination point for GTP; the sequence is GTTNAGKS. Residues 41–45 are G2; sequence QTTRV. A G3 region spans residues 62-65; it reads DTPG. GTP-binding positions include 62–66 and 124–127; these read DTPGI and NKID. A G4 region spans residues 124-127; it reads NKID. The tract at residues 153–155 is G5; it reads ISA. The 78-residue stretch at 205 to 282 folds into the KH type-2 domain; sequence LRHELPYSLS…HLFLFVKVRE (78 aa).

The protein belongs to the TRAFAC class TrmE-Era-EngA-EngB-Septin-like GTPase superfamily. Era GTPase family. In terms of assembly, monomer.

It is found in the cytoplasm. The protein resides in the cell inner membrane. In terms of biological role, an essential GTPase that binds both GDP and GTP, with rapid nucleotide exchange. Plays a role in 16S rRNA processing and 30S ribosomal subunit biogenesis and possibly also in cell cycle regulation and energy metabolism. The protein is GTPase Era of Ehrlichia ruminantium (strain Gardel).